Here is a 355-residue protein sequence, read N- to C-terminus: NADH dehydrogenase [ubiquinone] 1 alpha subcomplex subunit 10, mitochondrial (355 aa).

Residues 1–35 (MALRLLKLGATSASVRVVAAGAQRVRGIHSSVQCK) constitute a mitochondrion transit peptide. At Ser-250 the chain carries Phosphoserine; by PINK1. The residue at position 285 (Lys-285) is an N6-succinyllysine.

Belongs to the complex I NDUFA10 subunit family. Complex I is composed of 45 different subunits. This a component of the hydrophobic protein fraction. It depends on FAD as a cofactor. Phosphorylation at Ser-250 by PINK1 is required for the binding and/or reduction of the complex I substrate ubiquinone.

The protein localises to the mitochondrion matrix. Functionally, accessory subunit of the mitochondrial membrane respiratory chain NADH dehydrogenase (Complex I), that is believed not to be involved in catalysis. Complex I functions in the transfer of electrons from NADH to the respiratory chain. The immediate electron acceptor for the enzyme is believed to be ubiquinone. This chain is NADH dehydrogenase [ubiquinone] 1 alpha subcomplex subunit 10, mitochondrial (NDUFA10), found in Pongo pygmaeus (Bornean orangutan).